We begin with the raw amino-acid sequence, 2136 residues long: U5 small nuclear ribonucleoprotein 200 kDa helicase (2136 aa).

2 positions are modified to phosphoserine: Ser17 and Ser26. The disordered stretch occupies residues 39-81 (EVLSLVGKLEGTRMGDKAQRTKPQMQEERRAKRRKRDEDRHDM). Residue Lys46 forms a Glycyl lysine isopeptide (Lys-Gly) (interchain with G-Cter in SUMO2) linkage. Over residues 48-81 (EGTRMGDKAQRTKPQMQEERRAKRRKRDEDRHDM) the composition is skewed to basic and acidic residues. Residues 54–84 (DKAQRTKPQMQEERRAKRRKRDEDRHDMNKM) are a coiled coil. Position 225 is a phosphoserine (Ser225). Thr389 carries the phosphothreonine modification. Positions 395 to 2129 (DLDQGGEALA…YKFSVDVKEA (1735 aa)) are interaction with C9orf78 and WBP4. A Helicase ATP-binding 1 domain is found at 490 to 673 (RAALETDENL…FLRVDPAKGL (184 aa)). 503 to 510 (APTGAGKT) contacts ATP. A DEAH box motif is present at residues 615 to 618 (DEIH). In terms of domain architecture, Helicase C-terminal 1 spans 684–921 (PLEQTYVGIT…NAKDAVNWLG (238 aa)). Tyr709 bears the Phosphotyrosine mark. Lys944 participates in a covalent cross-link: Glycyl lysine isopeptide (Lys-Gly) (interchain with G-Cter in SUMO). Position 971 is an N6-acetyllysine; alternate (Lys971). A Glycyl lysine isopeptide (Lys-Gly) (interchain with G-Cter in SUMO); alternate cross-link involves residue Lys971. The SEC63 1 domain maps to 982–1286 (TELGRIASHY…SCETQLPVSF (305 aa)). Residues Lys1071 and Lys1199 each participate in a glycyl lysine isopeptide (Lys-Gly) (interchain with G-Cter in SUMO) cross-link. Residues 1282 to 2136 (LPVSFRHLIL…KEAETDSDSD (855 aa)) form an interaction with TSSC4 region. The Helicase ATP-binding 2 domain occupies 1337–1512 (NTVYNSDDNV…WLGCSATSTF (176 aa)). An ATP-binding site is contributed by 1350–1357 (APTGSGKT). Thr1428 carries the post-translational modification Phosphothreonine. The short motif at 1454–1457 (DEVH) is the DEAH box element. The Helicase C-terminal 2 domain maps to 1545 to 1753 (PVYHAITKHS…TIENKQDAVD (209 aa)). The residue at position 1765 (Thr1765) is a Phosphothreonine. Residues 1812–2124 (PLNLGMIAAY…GCDQEYKFSV (313 aa)) form the SEC63 2 domain. Position 2002 is a phosphoserine (Ser2002). Residue Lys2091 forms a Glycyl lysine isopeptide (Lys-Gly) (interchain with G-Cter in SUMO) linkage. Thr2131 bears the Phosphothreonine mark. Phosphoserine is present on residues Ser2133 and Ser2135.

It belongs to the helicase family. SKI2 subfamily. Component of a core complex containing at least PRPF8, SNRNP200, EFTUD2 and SNRNP40. Component of the U5 snRNP and U4/U6-U5 tri-snRNP complexes, building blocks of the spliceosome. Component of the U4/U6-U5 tri-snRNP complex composed of the U4, U6 and U5 snRNAs and at least PRPF3, PRPF4, PRPF6, PRPF8, PRPF31, SNRNP200, TXNL4A, SNRNP40, DDX23, CD2BP2, PPIH, SNU13, EFTUD2, SART1 and USP39. Component of precatalytic, catalytic and postcatalytic spliceosomal complexes. Component of the minor spliceosome, which splices U12-type introns. Interacts with C9orf78; the interaction is direct and mutually exclusive with its interaction with WBP4. Interacts with WBP4; the interaction is mutually exclusive with its interaction with C9orf78. Interacts with PRPF8. Interacts with TSSC4; the interaction is direct, excludes recruitment of C9ORF78 and WBP4 to SNRNP200 and negatively regulates its RNA helicase activity.

The protein resides in the nucleus. It catalyses the reaction ATP + H2O = ADP + phosphate + H(+). Catalyzes the ATP-dependent unwinding of U4/U6 RNA duplices, an essential step in the assembly of a catalytically active spliceosome. Plays a role in pre-mRNA splicing as core component of precatalytic, catalytic and postcatalytic spliceosomal complexes. As a component of the minor spliceosome, involved in the splicing of U12-type introns in pre-mRNAs. Involved in spliceosome assembly, activation and disassembly. Mediates changes in the dynamic network of RNA-RNA interactions in the spliceosome. The sequence is that of U5 small nuclear ribonucleoprotein 200 kDa helicase (Snrnp200) from Mus musculus (Mouse).